A 215-amino-acid chain; its full sequence is Cytochrome c biogenesis ATP-binding export protein CcmA (215 aa).

The ABC transporter domain occupies 12-215; that stretch reads LAAHALTYSR…TRLLHLQKAP (204 aa). 44–51 is a binding site for ATP; it reads GPNGIGKT.

Belongs to the ABC transporter superfamily. CcmA exporter (TC 3.A.1.107) family. The complex is composed of two ATP-binding proteins (CcmA) and two transmembrane proteins (CcmB).

The protein localises to the cell inner membrane. The enzyme catalyses heme b(in) + ATP + H2O = heme b(out) + ADP + phosphate + H(+). Its function is as follows. Part of the ABC transporter complex CcmAB involved in the biogenesis of c-type cytochromes; once thought to export heme, this seems not to be the case, but its exact role is uncertain. Responsible for energy coupling to the transport system. This chain is Cytochrome c biogenesis ATP-binding export protein CcmA, found in Xylella fastidiosa (strain Temecula1 / ATCC 700964).